Reading from the N-terminus, the 576-residue chain is Probable DNA ligase (576 aa).

Glu235 serves as a coordination point for ATP. Lys237 (N6-AMP-lysine intermediate) is an active-site residue. ATP-binding residues include Arg242, Arg257, Glu285, Phe324, Arg422, and Lys428.

It belongs to the ATP-dependent DNA ligase family. Mg(2+) serves as cofactor.

It carries out the reaction ATP + (deoxyribonucleotide)n-3'-hydroxyl + 5'-phospho-(deoxyribonucleotide)m = (deoxyribonucleotide)n+m + AMP + diphosphate.. Functionally, DNA ligase that seals nicks in double-stranded DNA during DNA replication, DNA recombination and DNA repair. The chain is Probable DNA ligase from Koribacter versatilis (strain Ellin345).